The sequence spans 261 residues: uncharacterized protein (261 aa).

Polar residues predominate over residues 20–34 (TMSTPFLESDNSNTQ). Residues 20–55 (TMSTPFLESDNSNTQSISGRIGSNNNSNSKNSGGIG) are disordered. The segment covering 35–51 (SISGRIGSNNNSNSKNS) has biased composition (low complexity). 3 helical membrane-spanning segments follow: residues 113-133 (LFSG…ILLL), 183-200 (LIFW…ILFF), and 204-226 (IISL…MANV).

The protein belongs to the TVP23 family.

Its subcellular location is the membrane. This is an uncharacterized protein from Dictyostelium discoideum (Social amoeba).